A 116-amino-acid chain; its full sequence is Large ribosomal subunit protein uL18 (116 aa).

This sequence belongs to the universal ribosomal protein uL18 family. In terms of assembly, part of the 50S ribosomal subunit; part of the 5S rRNA/L5/L18/L25 subcomplex. Contacts the 5S and 23S rRNAs.

Its function is as follows. This is one of the proteins that bind and probably mediate the attachment of the 5S RNA into the large ribosomal subunit, where it forms part of the central protuberance. The chain is Large ribosomal subunit protein uL18 from Shewanella woodyi (strain ATCC 51908 / MS32).